Here is a 585-residue protein sequence, read N- to C-terminus: Auxin response factor 17 (585 aa).

Residues 119 to 221 (FAKILTPSDA…EMFIGVRRTP (103 aa)) constitute a DNA-binding region (TF-B3). 2 disordered regions span residues 483–517 (EMMNFGSPPSDNLSPNSNTTNLSSGNDLVGNRGPL) and 535–585 (EHSE…SSQG). Positions 488 to 510 (GSPPSDNLSPNSNTTNLSSGNDL) are enriched in low complexity. A compositionally biased stretch (polar residues) spans 573 to 585 (KHSNSNAGSSSQG).

This sequence belongs to the ARF family. Homo and heterodimers.

It localises to the nucleus. Functionally, auxin response factors (ARFs) are transcriptional factors that bind specifically to the DNA sequence 5'-TGTCTC-3' found in the auxin-responsive promoter elements (AuxREs). Could act as transcriptional activator or repressor. Formation of heterodimers with Aux/IAA proteins may alter their ability to modulate early auxin response genes expression. This is Auxin response factor 17 (ARF17) from Arabidopsis thaliana (Mouse-ear cress).